A 183-amino-acid polypeptide reads, in one-letter code: uncharacterized protein (183 aa).

K21 is covalently cross-linked (Glycyl lysine isopeptide (Lys-Gly) (interchain with G-Cter in ubiquitin)). 2 disordered regions span residues 24-111 and 160-183; these read NTTT…QNDN and PQSI…TRRP. Positions 99 to 108 are enriched in low complexity; the sequence is QQQQQQQQQQ. A compositionally biased stretch (polar residues) spans 170–183; it reads LPPSNASNTTTRRP.

Its subcellular location is the cytoplasm. This is an uncharacterized protein from Saccharomyces cerevisiae (strain ATCC 204508 / S288c) (Baker's yeast).